The sequence spans 349 residues: Magnesium-protoporphyrin IX monomethyl ester [oxidative] cyclase (349 aa).

Residues 1–10 (MTATTATAPT) show a composition bias toward low complexity. The interval 1–23 (MTATTATAPTMRGGGRNELPPHL) is disordered.

This sequence belongs to the AcsF family. Requires Fe cation as cofactor.

The enzyme catalyses Mg-protoporphyrin IX 13-monomethyl ester + 3 NADPH + 3 O2 + 2 H(+) = 3,8-divinyl protochlorophyllide a + 3 NADP(+) + 5 H2O. It participates in porphyrin-containing compound metabolism; chlorophyll biosynthesis (light-independent). Functionally, catalyzes the formation of the isocyclic ring in chlorophyll biosynthesis. Mediates the cyclase reaction, which results in the formation of divinylprotochlorophyllide (Pchlide) characteristic of all chlorophylls from magnesium-protoporphyrin IX 13-monomethyl ester (MgPMME). The polypeptide is Magnesium-protoporphyrin IX monomethyl ester [oxidative] cyclase (Prochlorococcus marinus (strain MIT 9313)).